The following is a 2091-amino-acid chain: MKGHQFKFWIFELREILREIKNSHYFLDSWTQFNSVGSFIHIFFHQEHFIKLFDPRIWSILLSRNSQGSTSNRYFTIKGVVILFVVAVLIYRINSRNMVERKNLYLIGLLPIPMNSIGPRNDTLEESVGSSNINRLIVSLLYLPKGKKISESCFLNPKESTWVLPITKKCSMPESNWGSRWWRNWIGKKRDSSQLKGSSDQSRDPLDSISNEDSEYHTLINQRKIQQLKERSILWDPSFLQTERTEIESDRFPKSLSGYSSMSRLFTEREKQVINHLLPEEIEEFLGNPTRSVRSFFSDRWSELHLGSNPTERSTRDHKLLKKQQDLSFVPSRRSEKKEMVNIFKIITYLQNTVSIHPISSYPGCDMVPKDEPDMDSSNKISFLNKNPFLDLFHLFHDRNMGGYTLHHDFESEERFQEMADLFTLSITEPDLVYHKGFAFSIDSYGLDQKQFLNEVFNSRDESKKKSLLALPPFFYEENESFYRRIIKKWVRISCGNDLEDPKPKKMVFASNNLNVLNRFFLMNRSDRNFEYGIQRDQIGKDTLNHRTRMKYMINQHLSNLKKSQKRWFDPLILISRTERSTNRDPDAYRYKWSNGSNNFQEHLDHFVSERKSRFRVVFDRLRINQYSIDWSEVIDKKGLSKPFRFFLSKSLLFLSKSLLFLSKFLFFLSNSLPFFFVSFGNIPIHRSEIYIYELKGPNDQLCNQLLESIGLQIVHLKKLKPFLLDDHDTSQKSKFLINGGTISPFLFNKIPKWMIYSFHTRNNRRKSFANTDSYFSTIFHDQDYWLNPVKPFHRSSLISSFYKANQLRFLNNPHHFCFYCNKRFPFYVEKARINNSDFTYGQFLNILFIHNKIFSLCVGKKKHAFWGRDTISPIESRVSNIFIPNDFPQGGGDETYNLYKSSHFPSRSDPFVRRAIYSIADISGTPLTEGQIVNFERTYCQPLSDLNLSDSEGKNSHQYLNFNSNMGLIHTPCSEKYLPSEKRKNRSLFLKKYVEKGQMYRTFQRDSAFSTLSKWNLFQTYIPWFLTSTGHKYLNWIFLDTFSGLLPIHLLPIHRLPILSSSQKFVSIFHDIMHVLDISWRILQKKLGLPQRNPIRKISSKCLHNLLLSEEMIHRNNESPLISTHLRSPNVREFLYSILFLLLVAGYLVRTHLIFVSRASSELQIEFEKVKSLMISSYMIELRKLLDRYPTSEPNSFWLKNLFLVALEQLGDSLEEIWGFASGGNMLLGGDSAYGVKSIRSKKKYLNINLIDLISIIPNPISRITFSKNTRHLSHTSKEIYSLIRKRKNVNGDWIDDKIESWVANSDSIDDEEREFLVQLSTLTTEKRIDQILLSLTHSDHLSKNDSGYQMIEQRGAIYLRYLVDIHKKYLMNYEFNTSCLAERRIFLAHYQTITYSQTSCGANSFHLPSHGKPFSLRLALSPSRGILVIGSIGTGRSYLVKYLATNSYVPFITVFLNKFLDNLSEDIDASEDIDASEDIDASEDIDASDDIDRDLHTELELLTMDMMSEKDRFYITLQFELAKAMSPCIIWIPNIHDLDVNESNYFSLGLLVNHLSRDCERCSTRNILVIASTHIPQKVDPALIAPNKLNTCIKIRRLLIPQQRKHFFTLSYTRGFRLEKKMFHTNGFGSITMGSNARDLVALTNEALSISITQKKSIIDTNTIRSAFHRQTWDLRSQVRSVQDHGILFYQIGRAVAQNVLLSNCPIDPISIYIKKKSCNEGDSYLYKWYFELGTSMKKLTILLYLLSCSAGSVAQDLWSLPGPDERNGITSYGLVENDSDLVHGLLQVEGALVGSSRTEKDCSQFDNDRVTLLLRPEPRNPLDMMQNGSCSILDQRFLYEKNESEFEEGEGALDPQQIEEDLFNHIVWAPRIWHPWGILFDCIERPNELGFPYWSRSFRGKRILYDEEDELQENDSEFLQSGTMQYQTRDRSSKEQGFFRISQFIWDPADPLFVLFKDQSSVSVFSHRELFADEEMSKGLLTSQTDPPTSIYKRWFIKKTQEKHFELLINRQRWFRTTSSLSNGSFRSNTLSESYQYLSNLFLSNGTLLDQMTKTLLRKRWLFPDEMKIGFMEQEKDFPFLSRKVMWP.

The tract at residues Asp-191–Ser-210 is disordered. An ATP-binding site is contributed by Gly-1432 to Ser-1439.

It belongs to the Ycf2 family.

The protein localises to the plastid. Its subcellular location is the chloroplast stroma. In terms of biological role, probable ATPase of unknown function. Its presence in a non-photosynthetic plant (Epifagus virginiana) and experiments in tobacco indicate that it has an essential function which is probably not related to photosynthesis. This chain is Protein Ycf2, found in Daucus carota (Wild carrot).